Reading from the N-terminus, the 393-residue chain is Polygalacturonase (393 aa).

An N-terminal signal peptide occupies residues 1–23 (MANRRSLFSLSLIFVFMINSAIA). 6 PbH1 repeats span residues 115–136 (VNGV…WACK), 178–204 (FQNV…HVQM), 205–226 (SSGV…SIGP), 228–248 (TSNL…SIGS), 258–279 (VQNV…RIKS), and 288–309 (ARNI…VIDQ). Residue D219 is the Proton donor of the active site. A disulfide bridge links C221 with C238. The active site involves H242. The N-linked (GlcNAc...) asparagine glycan is linked to N260. 2 disulfides stabilise this stretch: C349-C355 and C376-C392.

The protein belongs to the glycosyl hydrolase 28 family.

It is found in the secreted. Its subcellular location is the cell wall. The catalysed reaction is (1,4-alpha-D-galacturonosyl)n+m + H2O = (1,4-alpha-D-galacturonosyl)n + (1,4-alpha-D-galacturonosyl)m.. Functionally, acts in concert with the pectinesterase, in the ripening process. Is involved in cell wall metabolism, specifically in polyuronide degradation. The chain is Polygalacturonase from Prunus persica (Peach).